The chain runs to 112 residues: Protein NIM1-INTERACTING 3 (112 aa).

Disordered stretches follow at residues 1–20 and 77–112; these read MDRD…EEKM and EKAA…NLSL. Coiled coils occupy residues 1–35 and 69–96; these read MDRD…EMRK and NKAE…SKEK. A compositionally biased stretch (low complexity) spans 77–89; sequence EKAANESSSASNE.

This sequence belongs to the NPR1-interactor family. As to quaternary structure, interacts with NPR1 C-terminal region.

Its subcellular location is the nucleus. This chain is Protein NIM1-INTERACTING 3, found in Arabidopsis thaliana (Mouse-ear cress).